The primary structure comprises 274 residues: Indole-3-glycerol phosphate synthase (274 aa).

It belongs to the TrpC family.

The enzyme catalyses 1-(2-carboxyphenylamino)-1-deoxy-D-ribulose 5-phosphate + H(+) = (1S,2R)-1-C-(indol-3-yl)glycerol 3-phosphate + CO2 + H2O. It participates in amino-acid biosynthesis; L-tryptophan biosynthesis; L-tryptophan from chorismate: step 4/5. The chain is Indole-3-glycerol phosphate synthase from Kineococcus radiotolerans (strain ATCC BAA-149 / DSM 14245 / SRS30216).